Reading from the N-terminus, the 183-residue chain is Large ribosomal subunit protein uL5 (183 aa).

The protein belongs to the universal ribosomal protein uL5 family. In terms of assembly, part of the 50S ribosomal subunit; part of the 5S rRNA/L5/L18/L25 subcomplex. Contacts the 5S rRNA and the P site tRNA. Forms a bridge to the 30S subunit in the 70S ribosome.

This is one of the proteins that bind and probably mediate the attachment of the 5S RNA into the large ribosomal subunit, where it forms part of the central protuberance. In the 70S ribosome it contacts protein S13 of the 30S subunit (bridge B1b), connecting the 2 subunits; this bridge is implicated in subunit movement. Contacts the P site tRNA; the 5S rRNA and some of its associated proteins might help stabilize positioning of ribosome-bound tRNAs. This chain is Large ribosomal subunit protein uL5, found in Flavobacterium johnsoniae (strain ATCC 17061 / DSM 2064 / JCM 8514 / BCRC 14874 / CCUG 350202 / NBRC 14942 / NCIMB 11054 / UW101) (Cytophaga johnsonae).